A 311-amino-acid chain; its full sequence is tRNA-cytidine(32) 2-sulfurtransferase (311 aa).

The tract at residues 18 to 38 (KVGADHGPSEENGSSHPLFDN) is disordered. The short motif at 77 to 82 (SGGKDS) is the PP-loop motif element. [4Fe-4S] cluster is bound by residues Cys-152, Cys-155, and Cys-243.

This sequence belongs to the TtcA family. In terms of assembly, homodimer. Requires Mg(2+) as cofactor. It depends on [4Fe-4S] cluster as a cofactor.

It is found in the cytoplasm. It carries out the reaction cytidine(32) in tRNA + S-sulfanyl-L-cysteinyl-[cysteine desulfurase] + AH2 + ATP = 2-thiocytidine(32) in tRNA + L-cysteinyl-[cysteine desulfurase] + A + AMP + diphosphate + H(+). Its pathway is tRNA modification. Catalyzes the ATP-dependent 2-thiolation of cytidine in position 32 of tRNA, to form 2-thiocytidine (s(2)C32). The sulfur atoms are provided by the cysteine/cysteine desulfurase (IscS) system. This Agrobacterium fabrum (strain C58 / ATCC 33970) (Agrobacterium tumefaciens (strain C58)) protein is tRNA-cytidine(32) 2-sulfurtransferase.